A 106-amino-acid polypeptide reads, in one-letter code: Secreted RxLR effector protein 18 (106 aa).

A signal peptide spans 1-17 (MRGSTAMLLAAIALFSS). The short motif at 28 to 39 (RTLRSFEELEER) is the RxLR-dEER element.

Belongs to the RxLR effector family.

The protein localises to the secreted. It localises to the host cell. Its function is as follows. Effector that may act as a suppressor of cell death to interrupt plant immunity. I. This Plasmopara viticola (Downy mildew of grapevine) protein is Secreted RxLR effector protein 18.